Consider the following 414-residue polypeptide: Serine hydroxymethyltransferase (414 aa).

(6S)-5,6,7,8-tetrahydrofolate contacts are provided by residues Leu121 and 125–127; that span reads GHL. Lys229 carries the post-translational modification N6-(pyridoxal phosphate)lysine.

Belongs to the SHMT family. As to quaternary structure, homodimer. Requires pyridoxal 5'-phosphate as cofactor.

Its subcellular location is the cytoplasm. It catalyses the reaction (6R)-5,10-methylene-5,6,7,8-tetrahydrofolate + glycine + H2O = (6S)-5,6,7,8-tetrahydrofolate + L-serine. The protein operates within one-carbon metabolism; tetrahydrofolate interconversion. Its pathway is amino-acid biosynthesis; glycine biosynthesis; glycine from L-serine: step 1/1. Functionally, catalyzes the reversible interconversion of serine and glycine with tetrahydrofolate (THF) serving as the one-carbon carrier. This reaction serves as the major source of one-carbon groups required for the biosynthesis of purines, thymidylate, methionine, and other important biomolecules. Also exhibits THF-independent aldolase activity toward beta-hydroxyamino acids, producing glycine and aldehydes, via a retro-aldol mechanism. The polypeptide is Serine hydroxymethyltransferase (Thiobacillus denitrificans (strain ATCC 25259 / T1)).